The chain runs to 421 residues: Imidazolonepropionase (421 aa).

Fe(3+) is bound by residues histidine 80 and histidine 82. Zn(2+)-binding residues include histidine 80 and histidine 82. Arginine 89, tyrosine 152, and histidine 185 together coordinate 4-imidazolone-5-propanoate. Position 152 (tyrosine 152) interacts with N-formimidoyl-L-glutamate. Histidine 249 contributes to the Fe(3+) binding site. A Zn(2+)-binding site is contributed by histidine 249. Glutamate 252 is a binding site for 4-imidazolone-5-propanoate. A Fe(3+)-binding site is contributed by aspartate 324. Aspartate 324 is a Zn(2+) binding site. N-formimidoyl-L-glutamate-binding residues include asparagine 326 and glycine 328. Serine 329 is a binding site for 4-imidazolone-5-propanoate.

Belongs to the metallo-dependent hydrolases superfamily. HutI family. As to quaternary structure, homodimer. Zn(2+) is required as a cofactor. The cofactor is Fe(3+).

It is found in the cytoplasm. The enzyme catalyses 4-imidazolone-5-propanoate + H2O = N-formimidoyl-L-glutamate. It participates in amino-acid degradation; L-histidine degradation into L-glutamate; N-formimidoyl-L-glutamate from L-histidine: step 3/3. Functionally, catalyzes the hydrolytic cleavage of the carbon-nitrogen bond in imidazolone-5-propanoate to yield N-formimidoyl-L-glutamate. It is the third step in the universal histidine degradation pathway. The sequence is that of Imidazolonepropionase from Bacillus subtilis (strain 168).